We begin with the raw amino-acid sequence, 306 residues long: Elongation factor Ts (306 aa).

The involved in Mg(2+) ion dislocation from EF-Tu stretch occupies residues 80–83 (TDFV).

Belongs to the EF-Ts family.

It is found in the cytoplasm. Functionally, associates with the EF-Tu.GDP complex and induces the exchange of GDP to GTP. It remains bound to the aminoacyl-tRNA.EF-Tu.GTP complex up to the GTP hydrolysis stage on the ribosome. The polypeptide is Elongation factor Ts (Methylorubrum extorquens (strain CM4 / NCIMB 13688) (Methylobacterium extorquens)).